The sequence spans 721 residues: Catalase-peroxidase 1 (721 aa).

Residues 98 to 223 (WHAAGSYRVA…LAAVQMGLIY (126 aa)) constitute a cross-link (tryptophyl-tyrosyl-methioninium (Trp-Tyr) (with M-249)). His-99 serves as the catalytic Proton acceptor. The tryptophyl-tyrosyl-methioninium (Tyr-Met) (with W-98) cross-link spans 223-249 (YVNPEGVNGQPDPLRTAQDVRVTFGRM). His-264 serves as a coordination point for heme b.

It belongs to the peroxidase family. Peroxidase/catalase subfamily. As to quaternary structure, homodimer or homotetramer. Heme b serves as cofactor. Post-translationally, formation of the three residue Trp-Tyr-Met cross-link is important for the catalase, but not the peroxidase activity of the enzyme.

The catalysed reaction is H2O2 + AH2 = A + 2 H2O. It catalyses the reaction 2 H2O2 = O2 + 2 H2O. Its function is as follows. Bifunctional enzyme with both catalase and broad-spectrum peroxidase activity. The chain is Catalase-peroxidase 1 from Legionella pneumophila (strain Corby).